Here is a 498-residue protein sequence, read N- to C-terminus: POTE ankyrin domain family member A (498 aa).

5 ANK repeats span residues 98–127 (KKRTALHLACANGNSEVVSLLLDRQCQLHV), 131–160 (KKRTALIKAVQCQEDECALMLLQHGTDPNL), 164–193 (YGNTALHYAVYNEDKLMAKTLLLYGADIES), 197–226 (GGLTPLLLAVHGQKQRMVKFLIKKKANLNA), and 230–259 (FGRTALILAVRCGSASIVSLLLQQNIDVFS). The tract at residues 289–410 (NQMPNNSSGN…SNEKNKVKSQ (122 aa)) is disordered. Over residues 290–302 (QMPNNSSGNSNPE) the composition is skewed to polar residues. Over residues 303–338 (QDLKLTSEEEPQRLKGSENSQHEKVTQEPDINKDCD) the composition is skewed to basic and acidic residues. Residues 348 to 359 (HGSNNVGLSENL) are compositionally biased toward polar residues. Positions 392–406 (EEYHRPEKKSNEKNK) are enriched in basic and acidic residues. A coiled-coil region spans residues 469 to 497 (EHLLELKNSHYEQLTVEVEQMENMVHVLQ).

This sequence belongs to the POTE family.

The chain is POTE ankyrin domain family member A (POTEA) from Homo sapiens (Human).